The following is a 63-amino-acid chain: Large ribosomal subunit protein bL32 (63 aa).

Belongs to the bacterial ribosomal protein bL32 family.

The polypeptide is Large ribosomal subunit protein bL32 (rpmF) (Aquifex aeolicus (strain VF5)).